The sequence spans 37 residues: Peptide encoded by miPEP164a (37 aa).

Regulatory peptide encoded by the primary transcript (pri-miR164a) of the microRNA miR164a that enhances the accumulation of its corresponding mature miRNA. Acts probably as a transcriptional activator of its corresponding pri-miRNA. This Arabidopsis thaliana (Mouse-ear cress) protein is Peptide encoded by miPEP164a.